Consider the following 477-residue polypeptide: tRNA-2-methylthio-N(6)-dimethylallyladenosine synthase (477 aa).

One can recognise an MTTase N-terminal domain in the interval 3 to 120 (KKLYIKTWGC…LPEMINELKG (118 aa)). 6 residues coordinate [4Fe-4S] cluster: Cys12, Cys49, Cys83, Cys157, Cys161, and Cys164. The region spanning 143-375 (RAEGPTAFVS…QQRITQQALR (233 aa)) is the Radical SAM core domain. The 64-residue stretch at 378–441 (RHMVGTEQRI…TNSLRGEVVR (64 aa)) folds into the TRAM domain.

It belongs to the methylthiotransferase family. MiaB subfamily. In terms of assembly, monomer. [4Fe-4S] cluster is required as a cofactor.

It localises to the cytoplasm. The enzyme catalyses N(6)-dimethylallyladenosine(37) in tRNA + (sulfur carrier)-SH + AH2 + 2 S-adenosyl-L-methionine = 2-methylsulfanyl-N(6)-dimethylallyladenosine(37) in tRNA + (sulfur carrier)-H + 5'-deoxyadenosine + L-methionine + A + S-adenosyl-L-homocysteine + 2 H(+). In terms of biological role, catalyzes the methylthiolation of N6-(dimethylallyl)adenosine (i(6)A), leading to the formation of 2-methylthio-N6-(dimethylallyl)adenosine (ms(2)i(6)A) at position 37 in tRNAs that read codons beginning with uridine. The sequence is that of tRNA-2-methylthio-N(6)-dimethylallyladenosine synthase from Alteromonas mediterranea (strain DSM 17117 / CIP 110805 / LMG 28347 / Deep ecotype).